Reading from the N-terminus, the 154-residue chain is Vimentin (154 aa).

The segment covering methionine 1–arginine 13 has biased composition (low complexity). The tract at residues methionine 1–valine 31 is disordered. Position 2 is an N-acetylserine (serine 2). Residues serine 2–glutamate 95 are head. Serine 5 is subject to Phosphoserine. The residue at position 7 (serine 7) is a Phosphoserine; by PKA and PKC; alternate. Serine 7 carries O-linked (GlcNAc) serine; alternate glycosylation. Phosphoserine is present on serine 8. Phosphoserine; by PKC occurs at positions 9 and 10. Phosphothreonine is present on threonine 20. Residue serine 25 is modified to Phosphoserine; by PKA and PKC. Phosphoserine; by PKC is present on serine 26. O-linked (GlcNAc) threonine glycosylation is present at threonine 33. An O-linked (GlcNAc) serine; alternate glycan is attached at serine 34. Serine 34 carries the post-translational modification Phosphoserine; by PKC; alternate. Serine 39 is modified (phosphoserine; by CaMK2, PKA, PKC and ROCK2). Serine 42 is modified (phosphoserine; by PKC). Serine 49 carries the phosphoserine modification. Tyrosine 53 carries the post-translational modification Phosphotyrosine. Serine 55 is subject to Phosphoserine. The residue at position 56 (serine 56) is a Phosphoserine; by CDK5 and CDK1. Tyrosine 61 carries the post-translational modification Phosphotyrosine. Serine 66 bears the Phosphoserine; by PKA and PKC mark. Serine 72 carries the phosphoserine; by AURKB and ROCK2 modification. Serine 83 carries the phosphoserine; by CaMK2 modification. Serine 87 is subject to Phosphoserine. The coil 1A stretch occupies residues phenylalanine 96–leucine 131. Residues phenylalanine 96–leucine 131 adopt a coiled-coil conformation. The IF rod domain occupies glutamate 103–methionine 154. Residue lysine 104 forms a Glycyl lysine isopeptide (Lys-Gly) (interchain with G-Cter in SUMO2) linkage. A Phosphotyrosine modification is found at tyrosine 117. N6-acetyllysine; alternate occurs at positions 120, 129, and 139. Residues lysine 120 and lysine 129 each carry the N6-succinyllysine; alternate modification. Residues lysine 120, lysine 129, and lysine 139 each participate in a glycyl lysine isopeptide (Lys-Gly) (interchain with G-Cter in SUMO2); alternate cross-link. A linker 1 region spans residues leucine 132–glutamate 153. Serine 144 is subject to Phosphoserine. Position 154 (methionine 154) is a region of interest, coil 1B.

Belongs to the intermediate filament family. Homomer assembled from elementary dimers. Identified in complexes that contain VIM, EZR, AHNAK, BFSP1, BFSP2, ANK2, PLEC, PRX and spectrin. Interacts with BCAS3. Interacts with LGSN. Interacts with SYNM. Interacts (via rod region) with PLEC (via CH 1 domain). Interacts with STK33. Interacts with LARP6. Interacts with RAB8B. Interacts with TOR1A; the interaction associates TOR1A with the cytoskeleton. Interacts with TOR1AIP1. Interacts with TOR1AIP1. Interacts with DIAPH1. Interacts with EPPK1; interaction is dependent of higher-order structure of intermediate filament. Interacts with the non-receptor tyrosine kinase SRMS; the interaction leads to phosphorylation of VIM. Interacts with NOD2. Interacts (via head region) with CORO1C. Interacts with HDGF. Interacts with PRKCE (via phorbol-ester/DAG-type 2 domain). Interacts with BFSP2. Interacts with PPL. Interacts with PKP1 and PKP2. Interacts with SCRIB (via PDZ domains); the interaction protects SCRIB from proteasomal degradation and facilitates SCRIB localization to intermediate filaments, the interaction is reduced by cell contact inhibition. In terms of processing, one of the most prominent phosphoproteins in various cells of mesenchymal origin. Phosphorylation is enhanced during cell division, at which time vimentin filaments are significantly reorganized. Phosphorylation by PKN1 inhibits the formation of filaments. Filament disassembly during mitosis is promoted by phosphorylation at Ser-55 as well as by nestin. Phosphorylated at Ser-56 by CDK5 during neutrophil secretion in the cytoplasm. Phosphorylated by STK33. Phosphorylated on tyrosine residues by SRMS.

Its subcellular location is the cytoplasm. The protein resides in the cytoskeleton. It is found in the nucleus matrix. The protein localises to the cell membrane. Vimentins are class-III intermediate filaments found in various non-epithelial cells, especially mesenchymal cells. Vimentin is attached to the nucleus, endoplasmic reticulum, and mitochondria, either laterally or terminally. Plays a role in cell directional movement, orientation, cell sheet organization and Golgi complex polarization at the cell migration front. Protects SCRIB from proteasomal degradation and facilitates its localization to intermediate filaments in a cell contact-mediated manner. Its function is as follows. Involved with LARP6 in the stabilization of type I collagen mRNAs for CO1A1 and CO1A2. The sequence is that of Vimentin (VIM) from Ovis aries (Sheep).